The sequence spans 518 residues: Membrane-bound lytic murein transglycosylase F (518 aa).

The signal sequence occupies residues 1–21; that stretch reads MKKLKINYLFIGILALLLAVA. Positions 22-269 are non-LT domain; it reads LWPSIPWFGK…RIEEKYLGHG (248 aa). Positions 270–518 are LT domain; sequence DDFDYVDTRT…SRKGSEEKQN (249 aa). The active site involves Glu314.

The protein in the N-terminal section; belongs to the bacterial solute-binding protein 3 family. This sequence in the C-terminal section; belongs to the transglycosylase Slt family.

The protein localises to the cell outer membrane. The catalysed reaction is Exolytic cleavage of the (1-&gt;4)-beta-glycosidic linkage between N-acetylmuramic acid (MurNAc) and N-acetylglucosamine (GlcNAc) residues in peptidoglycan, from either the reducing or the non-reducing ends of the peptidoglycan chains, with concomitant formation of a 1,6-anhydrobond in the MurNAc residue.. Functionally, murein-degrading enzyme that degrades murein glycan strands and insoluble, high-molecular weight murein sacculi, with the concomitant formation of a 1,6-anhydromuramoyl product. Lytic transglycosylases (LTs) play an integral role in the metabolism of the peptidoglycan (PG) sacculus. Their lytic action creates space within the PG sacculus to allow for its expansion as well as for the insertion of various structures such as secretion systems and flagella. This Escherichia coli (strain ATCC 8739 / DSM 1576 / NBRC 3972 / NCIMB 8545 / WDCM 00012 / Crooks) protein is Membrane-bound lytic murein transglycosylase F.